The chain runs to 206 residues: Uridine kinase (206 aa).

Residue Gly-9–Thr-16 coordinates ATP.

This sequence belongs to the uridine kinase family.

The protein localises to the cytoplasm. It carries out the reaction uridine + ATP = UMP + ADP + H(+). It catalyses the reaction cytidine + ATP = CMP + ADP + H(+). The protein operates within pyrimidine metabolism; CTP biosynthesis via salvage pathway; CTP from cytidine: step 1/3. It participates in pyrimidine metabolism; UMP biosynthesis via salvage pathway; UMP from uridine: step 1/1. The protein is Uridine kinase of Borrelia hermsii (strain HS1 / DAH).